A 1489-amino-acid chain; its full sequence is Calmodulin-regulated spectrin-associated protein 2 (1489 aa).

Residues 222 to 335 (WKLVPARYRK…FMAELFWWFE (114 aa)) enclose the Calponin-homology (CH) domain. The segment at 375 to 415 (SSDFPSSGEGATFTQSHHHLPSRYSRPQAHSSASGGIRRSS) is disordered. Low complexity predominate over residues 405-415 (SSASGGIRRSS). 2 positions are modified to phosphoserine: serine 416 and serine 418. Threonine 426 bears the Phosphothreonine mark. A phosphoserine mark is found at serine 464, serine 598, serine 599, serine 611, and serine 673. 2 disordered regions span residues 611-639 (SPIT…EDSS) and 668-730 (TREA…GSEL). The segment covering 668–679 (TREALSPCPSTV) has biased composition (polar residues). Threonine 678 carries the phosphothreonine modification. The residue at position 680 (serine 680) is a Phosphoserine. Residues 680 to 699 (STKSQPGSSASSSSGVKMTS) are compositionally biased toward low complexity. Over residues 703–713 (QKFRKLNHTDG) the composition is skewed to basic and acidic residues. A coiled-coil region spans residues 756-793 (LLASEMVHLRMKLEEKRRAIEAQKKKMEAAFTKQRQKM). Residues 812-844 (LREEAAGAEDEKVYTDRAKEKESQKTDGQRSKS) form a disordered region. Serine 862 is modified (phosphoserine). Positions 887 to 926 (EILEYTKSIEKLNSSLHFLQQEMQRLSLQQEMLMQMREQQ) form a coiled coil. An MBD region region spans residues 922–1034 (MREQQSWVIS…IQTRSFVCFG (113 aa)). The tract at residues 925-1017 (QQSWVISPPQ…SVDSLPRLRR (93 aa)) is disordered. A phosphoserine mark is found at serine 931 and serine 936. Polar residues predominate over residues 960–989 (SSDSPRPTHPSPQSSNRKSASFSVKSQRTP). Phosphothreonine is present on residues threonine 997, threonine 1002, and threonine 1004. Serine 1008 and serine 1019 each carry phosphoserine. 3 disordered regions span residues 1032-1078 (CFGD…PFES), 1096-1152 (PNED…DKEQ), and 1191-1349 (KETQ…EYTG). The span at 1039-1075 (PQLKESKPKEEVKKEELESKGTLEQRGHNPEEKEIKP) shows a compositional bias: basic and acidic residues. The span at 1105–1117 (TEPPPKPVFPPTA) shows a compositional bias: pro residues. Basic and acidic residues-rich tracts occupy residues 1132 to 1152 (KPPE…DKEQ) and 1191 to 1252 (KETQ…DTVI). A Phosphoserine modification is found at serine 1148. The stretch at 1166–1238 (KDDQKAENDM…REFIRQEYMR (73 aa)) forms a coiled coil. A compositionally biased stretch (polar residues) spans 1287–1299 (SSLSLASLNTGDN). 3 positions are modified to phosphoserine: serine 1313, serine 1319, and serine 1321. The span at 1334-1346 (NASTTSSVASGTE) shows a compositional bias: polar residues. The region spanning 1349–1483 (GPKLYKEPSA…QTKRPVTPKK (135 aa)) is the CKK domain.

The protein belongs to the CAMSAP1 family. Interacts with CAMSAP3. Interacts with KATNA1 and KATNB1; leading to regulate the length of CAMSAP2-decorated microtubule stretches. Interacts with a complex formed by AKAP9 and PDE4DIP isoform 13/MMG8/SMYLE, which recruits CAMSAP2 to the Golgi. Interacts with MAPRE1/EB1.

Its subcellular location is the cytoplasm. It is found in the cytoskeleton. The protein resides in the golgi apparatus. It localises to the cilium basal body. Functionally, key microtubule-organizing protein that specifically binds the minus-end of non-centrosomal microtubules and regulates their dynamics and organization. Specifically recognizes growing microtubule minus-ends and autonomously decorates and stabilizes microtubule lattice formed by microtubule minus-end polymerization. Acts on free microtubule minus-ends that are not capped by microtubule-nucleating proteins or other factors and protects microtubule minus-ends from depolymerization. In addition, it also reduces the velocity of microtubule polymerization. Through the microtubule cytoskeleton, also regulates the organization of cellular organelles including the Golgi and the early endosomes. Essential for the tethering, but not for nucleation of non-centrosomal microtubules at the Golgi: together with Golgi-associated proteins AKAP9 and PDE4DIP, required to tether non-centrosomal minus-end microtubules to the Golgi, an important step for polarized cell movement. Also acts as a regulator of neuronal polarity and development: localizes to non-centrosomal microtubule minus-ends in neurons and stabilizes non-centrosomal microtubules, which is required for neuronal polarity, axon specification and dendritic branch formation. Through the microtubule cytoskeleton, regulates the autophagosome transport. In Homo sapiens (Human), this protein is Calmodulin-regulated spectrin-associated protein 2.